A 384-amino-acid chain; its full sequence is MYINTETEDLKTAIDAIRKAVKDRIAPLAAEVDDSGVIKPEIYDLLWDLGLMTVTYPPEYGGSETNPGTLLCIGCEEIAKACASTALLLIIQAVGSFPLMHGGRKELLDRIAPRIVNNRELAGYLVSEPGAGSDVKAIRTKAVKDGNDWVINGTKCWATNGPIASFYSCLCRTKDDKGVQGYSFFLVERNTPGLSVGKIEHKMGMRGSQTSEVILEDVRVPAENLLGELNNGFKLAMKDFDMSRPAIAAQALGISEGAFAQMETYSRERYTFGKPLCEHGMITQIIADSAALIEAGRGLIYQAADLYDKGKKNTKLASMAKFFMGDAAVKITTDAIQVFGGYGYTHDYPVERMFRDAKLTQIFEGANQIQRIVVAREIRDEQSK.

It belongs to the acyl-CoA dehydrogenase family. In terms of assembly, homotetramer. FAD is required as a cofactor.

The catalysed reaction is cyclohexane-1-carbonyl-CoA + oxidized [electron-transfer flavoprotein] + H(+) = cyclohex-1-ene-1-carbonyl-CoA + reduced [electron-transfer flavoprotein]. In terms of biological role, mediates the conversion of cyclohexane-1-carbonyl-CoA (ChCoA) into cyclohex-1-ene-1-carbonyl-CoA in biosynthesis of cyclohexane-1-carboxylate, a by-product produced during fermentation of benzoate and crotonate to acetate. The protein is Cyclohexane-1-carbonyl-CoA dehydrogenase of Syntrophus aciditrophicus (strain SB).